The primary structure comprises 88 residues: UPF0297 protein GTNG_2488 (88 aa).

Belongs to the UPF0297 family.

This is UPF0297 protein GTNG_2488 from Geobacillus thermodenitrificans (strain NG80-2).